The primary structure comprises 95 residues: Aspartyl/glutamyl-tRNA(Asn/Gln) amidotransferase subunit C (95 aa).

The protein belongs to the GatC family. Heterotrimer of A, B and C subunits.

The enzyme catalyses L-glutamyl-tRNA(Gln) + L-glutamine + ATP + H2O = L-glutaminyl-tRNA(Gln) + L-glutamate + ADP + phosphate + H(+). It catalyses the reaction L-aspartyl-tRNA(Asn) + L-glutamine + ATP + H2O = L-asparaginyl-tRNA(Asn) + L-glutamate + ADP + phosphate + 2 H(+). Its function is as follows. Allows the formation of correctly charged Asn-tRNA(Asn) or Gln-tRNA(Gln) through the transamidation of misacylated Asp-tRNA(Asn) or Glu-tRNA(Gln) in organisms which lack either or both of asparaginyl-tRNA or glutaminyl-tRNA synthetases. The reaction takes place in the presence of glutamine and ATP through an activated phospho-Asp-tRNA(Asn) or phospho-Glu-tRNA(Gln). This Ectopseudomonas mendocina (strain ymp) (Pseudomonas mendocina) protein is Aspartyl/glutamyl-tRNA(Asn/Gln) amidotransferase subunit C.